Here is a 982-residue protein sequence, read N- to C-terminus: Protein lin-10 (982 aa).

Over residues 1–16 (MSSEAVAQATAATTSP) the composition is skewed to polar residues. 5 disordered regions span residues 1–55 (MSSE…MIPP), 119–228 (QPAL…RTDS), 269–327 (TVAD…STVP), 432–511 (FAQQ…GTDD), and 525–593 (QREQ…SKET). Residues 33-44 (KGGGAGGGGGGE) are compositionally biased toward gly residues. Low complexity predominate over residues 119–134 (QPALQQPRPSSQASSS). Polar residues-rich tracts occupy residues 143 to 156 (RQTA…NVSP) and 169 to 190 (ETSG…SSDV). Residues 211–228 (GEEKSEEKRKLSGDRTDS) are compositionally biased toward basic and acidic residues. A compositionally biased stretch (polar residues) spans 301–318 (SLNQLRSSFNLPDDSTTV). Low complexity-rich tracts occupy residues 432–445 (FAQQ…APTP) and 454–464 (PSTSSGPSGAL). Positions 490-501 (NGTSTSTTNGAQ) are enriched in polar residues. Over residues 539-550 (QEAATAAQEAAE) the composition is skewed to low complexity. The span at 577–593 (GAERRGSVDKKKNSKET) shows a compositional bias: basic and acidic residues. Residues 604–788 (GVLFRARYLG…VLNSQELLGD (185 aa)) form the PID domain. PDZ domains lie at 801 to 886 (EVVV…TVVS) and 892 to 968 (EVRI…MPTS).

Interacts (via N-terminus) with egl-9 isoform e (via catalytic domain); the interaction regulates its trafficking; the interaction is direct. Interacts with rab-6.2 (in GTP-bound form). In terms of processing, phosphorylated on multiple Ser and Thr residues by cdk-5 which regulates its localization. Post-translationally, may be hydroxylated by egl-9 isoform e on multiple Pro residues which may prevent phosphorylation by cdk-5. Expressed in vulval epithelial cells and neurons.

The protein resides in the golgi apparatus. It localises to the golgi stack membrane. Its subcellular location is the trans-Golgi network membrane. It is found in the cytoplasm. The protein localises to the synapse. The protein resides in the perikaryon. In terms of biological role, required specifically for the determination of 3 vulval precursor cell fates P5.p, P6.p and P7.p during late second and early third larval stages; required for basolateral localization of receptor tyrosine kinase let-23. Could have a general but redundant role in development, functioning in diverse cell lineages to control cell fates. Regulates the trafficking of the glr-1 subunit of AMPA-type glutamate receptors (AMPRs) in the ventral nerve cord. This may be partly through interacting with the small GTPase rab-6.2 in its active GTP-bound state. In Caenorhabditis elegans, this protein is Protein lin-10.